A 556-amino-acid chain; its full sequence is DNA ligase B (556 aa).

K124 acts as the N6-AMP-lysine intermediate in catalysis.

Belongs to the NAD-dependent DNA ligase family. LigB subfamily.

The enzyme catalyses NAD(+) + (deoxyribonucleotide)n-3'-hydroxyl + 5'-phospho-(deoxyribonucleotide)m = (deoxyribonucleotide)n+m + AMP + beta-nicotinamide D-nucleotide.. In terms of biological role, catalyzes the formation of phosphodiester linkages between 5'-phosphoryl and 3'-hydroxyl groups in double-stranded DNA using NAD as a coenzyme and as the energy source for the reaction. This is DNA ligase B from Pseudomonas fluorescens (strain ATCC BAA-477 / NRRL B-23932 / Pf-5).